Here is a 250-residue protein sequence, read N- to C-terminus: tRNA (guanine-N(1)-)-methyltransferase (250 aa).

S-adenosyl-L-methionine contacts are provided by residues G113 and 133–138; that span reads IGDYVL.

This sequence belongs to the RNA methyltransferase TrmD family. As to quaternary structure, homodimer.

The protein localises to the cytoplasm. The enzyme catalyses guanosine(37) in tRNA + S-adenosyl-L-methionine = N(1)-methylguanosine(37) in tRNA + S-adenosyl-L-homocysteine + H(+). In terms of biological role, specifically methylates guanosine-37 in various tRNAs. The polypeptide is tRNA (guanine-N(1)-)-methyltransferase (Photorhabdus laumondii subsp. laumondii (strain DSM 15139 / CIP 105565 / TT01) (Photorhabdus luminescens subsp. laumondii)).